Here is a 124-residue protein sequence, read N- to C-terminus: Small ribosomal subunit protein uS12 (124 aa).

Residue aspartate 89 is modified to 3-methylthioaspartic acid.

The protein belongs to the universal ribosomal protein uS12 family. In terms of assembly, part of the 30S ribosomal subunit. Contacts proteins S8 and S17. May interact with IF1 in the 30S initiation complex.

Its function is as follows. With S4 and S5 plays an important role in translational accuracy. Interacts with and stabilizes bases of the 16S rRNA that are involved in tRNA selection in the A site and with the mRNA backbone. Located at the interface of the 30S and 50S subunits, it traverses the body of the 30S subunit contacting proteins on the other side and probably holding the rRNA structure together. The combined cluster of proteins S8, S12 and S17 appears to hold together the shoulder and platform of the 30S subunit. The chain is Small ribosomal subunit protein uS12 from Caldanaerobacter subterraneus subsp. tengcongensis (strain DSM 15242 / JCM 11007 / NBRC 100824 / MB4) (Thermoanaerobacter tengcongensis).